The primary structure comprises 515 residues: Fatty acyl-CoA reductase 1 (515 aa).

Residues 1–465 (MVSIPEYYEG…ARKHLNKLRN (465 aa)) are Cytoplasmic-facing. A helical membrane pass occupies residues 466 to 483 (IRYGFNTILVILIWRIFI). Residues 484-515 (ARSQMARNIWYFVVSLCYKFLSYFRASSTMRY) are Peroxisomal-facing.

Belongs to the fatty acyl-CoA reductase family.

The protein resides in the peroxisome membrane. The enzyme catalyses a long-chain fatty acyl-CoA + 2 NADPH + 2 H(+) = a long-chain primary fatty alcohol + 2 NADP(+) + CoA. It carries out the reaction hexadecanoyl-CoA + 2 NADPH + 2 H(+) = hexadecan-1-ol + 2 NADP(+) + CoA. It catalyses the reaction octadecanoyl-CoA + 2 NADPH + 2 H(+) = octadecan-1-ol + 2 NADP(+) + CoA. The catalysed reaction is (9Z)-octadecenoyl-CoA + 2 NADPH + 2 H(+) = (9Z)-octadecen-1-ol + 2 NADP(+) + CoA. The enzyme catalyses (9Z,12Z)-octadecadienoyl-CoA + 2 NADPH + 2 H(+) = (9Z,12Z)-octadecadien-1-ol + 2 NADP(+) + CoA. It carries out the reaction eicosanoyl-CoA + 2 NADPH + 2 H(+) = eicosan-1-ol + 2 NADP(+) + CoA. It catalyses the reaction 16-methylheptadecanoyl-CoA + 2 NADPH + 2 H(+) = 16-methylheptadecan-1-ol + 2 NADP(+) + CoA. The catalysed reaction is 18-methylnonadecanoyl-CoA + 2 NADPH + 2 H(+) = 18-methylnonadecan-1-ol + 2 NADP(+) + CoA. Functionally, catalyzes the reduction of saturated and unsaturated C16 or C18 fatty acyl-CoA to fatty alcohols. It plays an essential role in the production of ether lipids/plasmalogens which synthesis requires fatty alcohols. In parallel, it is also required for wax monoesters production since fatty alcohols also constitute a substrate for their synthesis. The protein is Fatty acyl-CoA reductase 1 of Gallus gallus (Chicken).